Reading from the N-terminus, the 509-residue chain is Photosystem II CP47 reaction center protein (509 aa).

6 helical membrane passes run 21–36 (SVHL…WAGS), 101–115 (IVLS…VWHW), 140–156 (GIHL…FGAF), 203–218 (IAAG…FHLT), 237–252 (VLSS…AFVV), and 457–472 (VFAL…HGAR).

The protein belongs to the PsbB/PsbC family. PsbB subfamily. As to quaternary structure, PSII is composed of 1 copy each of membrane proteins PsbA, PsbB, PsbC, PsbD, PsbE, PsbF, PsbH, PsbI, PsbJ, PsbK, PsbL, PsbM, PsbT, PsbX, PsbY, PsbZ, Psb30/Ycf12, peripheral proteins PsbO, CyanoQ (PsbQ), PsbU, PsbV and a large number of cofactors. It forms dimeric complexes. The cofactor is Binds multiple chlorophylls. PSII binds additional chlorophylls, carotenoids and specific lipids..

The protein resides in the cellular thylakoid membrane. Functionally, one of the components of the core complex of photosystem II (PSII). It binds chlorophyll and helps catalyze the primary light-induced photochemical processes of PSII. PSII is a light-driven water:plastoquinone oxidoreductase, using light energy to abstract electrons from H(2)O, generating O(2) and a proton gradient subsequently used for ATP formation. This chain is Photosystem II CP47 reaction center protein, found in Nostoc sp. (strain PCC 7120 / SAG 25.82 / UTEX 2576).